The chain runs to 399 residues: Mannan endo-1,4-beta-mannosidase 4 (399 aa).

The N-terminal stretch at 1–26 (MNNSIILIFVAILIIFPNEFSKPTRA) is a signal peptide. Substrate-binding residues include tryptophan 88 and asparagine 203. The active-site Proton donor is glutamate 204. Tyrosine 279 contacts substrate. Glutamate 318 serves as the catalytic Nucleophile. The cysteines at positions 347 and 354 are disulfide-linked. Position 360 (tryptophan 360) interacts with substrate.

Belongs to the glycosyl hydrolase 5 (cellulase A) family. As to expression, expressed in flowers and fruit pericarp.

Its subcellular location is the secreted. The enzyme catalyses Random hydrolysis of (1-&gt;4)-beta-D-mannosidic linkages in mannans, galactomannans and glucomannans.. Functionally, possesses endo-beta-mannanase and mannan transglycosylase activities. May be involved in cell wall degradation during fruit ripening. This chain is Mannan endo-1,4-beta-mannosidase 4 (MAN4), found in Solanum lycopersicum (Tomato).